A 113-amino-acid polypeptide reads, in one-letter code: Iron-sulfur cluster insertion protein ErpA (113 aa).

Iron-sulfur cluster-binding residues include cysteine 41, cysteine 105, and cysteine 107.

The protein belongs to the HesB/IscA family. As to quaternary structure, homodimer. Iron-sulfur cluster serves as cofactor.

Functionally, required for insertion of 4Fe-4S clusters for at least IspG. The protein is Iron-sulfur cluster insertion protein ErpA of Aliivibrio salmonicida (strain LFI1238) (Vibrio salmonicida (strain LFI1238)).